The chain runs to 121 residues: MARIAGVNIPNHKHTEIGLTAIYGVGRSRARKICEATGVPFDKKVKDLTDADLEKLRDEVGKVTVEGDLRRETTMNIKRLMDLGCYRGMRHRKGLPLRGQRTRTNARTRKGPRKAGVALKK.

Positions histidine 91–lysine 121 are disordered.

Belongs to the universal ribosomal protein uS13 family. Part of the 30S ribosomal subunit. Forms a loose heterodimer with protein S19. Forms two bridges to the 50S subunit in the 70S ribosome.

Its function is as follows. Located at the top of the head of the 30S subunit, it contacts several helices of the 16S rRNA. In the 70S ribosome it contacts the 23S rRNA (bridge B1a) and protein L5 of the 50S subunit (bridge B1b), connecting the 2 subunits; these bridges are implicated in subunit movement. Contacts the tRNAs in the A and P-sites. In Cupriavidus pinatubonensis (strain JMP 134 / LMG 1197) (Cupriavidus necator (strain JMP 134)), this protein is Small ribosomal subunit protein uS13.